The following is a 602-amino-acid chain: UvrABC system protein C (602 aa).

A GIY-YIG domain is found at 19-97 (EEPGVYRMIG…IKSLAPRYNI (79 aa)). Positions 206-241 (SEVIDDLTARMHAAAERLAFEEAAACRDQVRVLQAV) constitute a UVR domain.

It belongs to the UvrC family. In terms of assembly, interacts with UvrB in an incision complex.

The protein localises to the cytoplasm. The UvrABC repair system catalyzes the recognition and processing of DNA lesions. UvrC both incises the 5' and 3' sides of the lesion. The N-terminal half is responsible for the 3' incision and the C-terminal half is responsible for the 5' incision. The sequence is that of UvrABC system protein C from Aromatoleum aromaticum (strain DSM 19018 / LMG 30748 / EbN1) (Azoarcus sp. (strain EbN1)).